The sequence spans 76 residues: Beta-defensin 121 (76 aa).

The signal sequence occupies residues 1-15; it reads MKLLLLLLTVTLLLA. Intrachain disulfides connect Cys23–Cys50, Cys30–Cys44, and Cys34–Cys51.

Belongs to the beta-defensin family.

It is found in the secreted. Functionally, has antibacterial activity. In Pan troglodytes (Chimpanzee), this protein is Beta-defensin 121 (DEFB121).